The sequence spans 121 residues: Small ribosomal subunit protein bS21m (121 aa).

The transit peptide at 1–14 (MNSSYFPGVLGVRW) directs the protein to the mitochondrion.

This sequence belongs to the bacterial ribosomal protein bS21 family. As to quaternary structure, component of the mitochondrial small ribosomal subunit (mt-SSU). Mature yeast 74S mitochondrial ribosomes consist of a small (37S) and a large (54S) subunit. The 37S small subunit contains a 15S ribosomal RNA (15S mt-rRNA) and at least 32 different proteins. The 54S large subunit contains a 21S rRNA (21S mt-rRNA) and at least 45 different proteins.

The protein resides in the mitochondrion. In terms of biological role, component of the mitochondrial ribosome (mitoribosome), a dedicated translation machinery responsible for the synthesis of mitochondrial genome-encoded proteins, including at least some of the essential transmembrane subunits of the mitochondrial respiratory chain. The mitoribosomes are attached to the mitochondrial inner membrane and translation products are cotranslationally integrated into the membrane. This Schizosaccharomyces pombe (strain 972 / ATCC 24843) (Fission yeast) protein is Small ribosomal subunit protein bS21m (mrp21).